The primary structure comprises 307 residues: Ornithine carbamoyltransferase (307 aa).

Carbamoyl phosphate is bound by residues 50-53, Q77, R101, and 128-131; these read STRT and HPCQ. Residues N160, D224, and 228–229 contribute to the L-ornithine site; that span reads SM. Carbamoyl phosphate-binding positions include 264–265 and R292; that span reads CL.

It belongs to the aspartate/ornithine carbamoyltransferase superfamily. OTCase family. As to quaternary structure, homotrimer.

The protein resides in the cytoplasm. It carries out the reaction carbamoyl phosphate + L-ornithine = L-citrulline + phosphate + H(+). Its pathway is amino-acid biosynthesis; L-arginine biosynthesis; L-arginine from L-ornithine and carbamoyl phosphate: step 1/3. In terms of biological role, reversibly catalyzes the transfer of the carbamoyl group from carbamoyl phosphate (CP) to the N(epsilon) atom of ornithine (ORN) to produce L-citrulline, which is a substrate for argininosuccinate synthetase, the enzyme involved in the final step in arginine biosynthesis. The chain is Ornithine carbamoyltransferase (argF) from Mycobacterium bovis (strain ATCC BAA-935 / AF2122/97).